Reading from the N-terminus, the 448-residue chain is Exodeoxyribonuclease 7 large subunit (448 aa).

It belongs to the XseA family. As to quaternary structure, heterooligomer composed of large and small subunits.

The protein resides in the cytoplasm. It catalyses the reaction Exonucleolytic cleavage in either 5'- to 3'- or 3'- to 5'-direction to yield nucleoside 5'-phosphates.. In terms of biological role, bidirectionally degrades single-stranded DNA into large acid-insoluble oligonucleotides, which are then degraded further into small acid-soluble oligonucleotides. The protein is Exodeoxyribonuclease 7 large subunit of Exiguobacterium sp. (strain ATCC BAA-1283 / AT1b).